The following is a 372-amino-acid chain: Protein Wnt-1 (372 aa).

An N-terminal signal peptide occupies residues 1–29; the sequence is MLKSTQVILIFILLISIVESLSWLALGLA. 3 cysteine pairs are disulfide-bonded: C77/C88, C130/C138, and C140/C158. N87 is a glycosylation site (N-linked (GlcNAc...) asparagine). A glycan (N-linked (GlcNAc...) asparagine) is linked at N187. 8 disulfide bridges follow: C225-C239, C227-C234, C301-C332, C317-C327, C331-C371, C347-C362, C349-C359, and C354-C355. S231 carries O-palmitoleoyl serine; by mom-1 lipidation.

The protein belongs to the Wnt family. In terms of processing, palmitoleoylation is required for efficient binding to frizzled receptors. Depalmitoleoylation leads to Wnt signaling pathway inhibition. As to expression, expressed in intestine, some head neurons and ventral nerve cord and pharyngeal neurons. Expressed in the tail and weakly expressed in the vulva and body wall muscles. Expressed highly in posterior dorsal and ventral muscle cells.

Its subcellular location is the secreted. The protein localises to the extracellular space. It localises to the extracellular matrix. It is found in the cytoplasm. The protein resides in the cell membrane. In terms of biological role, ligand for members of the frizzled family of seven transmembrane receptors. Probable developmental protein. May be a signaling molecule which affects the development of discrete regions of tissues. Is likely to signal over only few cell diameters. Binds receptor tyrosine kinase cam-1. Together with Wnt ligand cwn-2, regulates the migration of CAN, ALM, BDU and HSN neurons during embryogenesis, the migration of QL and QR neuroblast descendants during larval development, and polarity of ALM neurons. Also acts with the Wnt ligand egl-20 to direct HSN neuron migration. Acts through the Wnt receptor cfz-2 to direct ALM migration. Also plays a role in axon growth and guidance in HSN and male CP neurons. In addition, together with Wnt ligand cwn-2, negatively regulates developmental neurite pruning of AIM neurons probably by acting as a ligand for receptor tyrosine kinase cam-1. Probably by activating the Wnt/Frizzled pathway, may regulate vulva development. May act redundantly with other Wnt ligands such as cwn-2 and mom-2 to control seam cell polarity. The chain is Protein Wnt-1 (cwn-1) from Caenorhabditis elegans.